The chain runs to 281 residues: Probable endonuclease 4 (281 aa).

The Zn(2+) site is built by histidine 69, histidine 109, glutamate 145, aspartate 179, histidine 182, histidine 216, aspartate 229, histidine 231, and glutamate 261.

It belongs to the AP endonuclease 2 family. Requires Zn(2+) as cofactor.

The catalysed reaction is Endonucleolytic cleavage to 5'-phosphooligonucleotide end-products.. Endonuclease IV plays a role in DNA repair. It cleaves phosphodiester bonds at apurinic or apyrimidinic (AP) sites, generating a 3'-hydroxyl group and a 5'-terminal sugar phosphate. The protein is Probable endonuclease 4 of Pectobacterium carotovorum subsp. carotovorum (strain PC1).